The primary structure comprises 270 residues: MSRIKNTFAALSAQGKKGLIPFMTAGDPDPARTVEFMHALAAGGADVIELGVPFSDPMADGPVIQQSSERALAHGVSLRHVIADVKRFRETNDTTPVVLMGYANPIERMGTEAFAKAAKEAGVDGVLVVDYPPEECANFAEQMQSAGIDPIFLLAPTSTDERIAEVGKIASGYVYYVSLKGVTGAANLDVSSIASKIPAIKSRVPLPVGVGFGIRDAQTARSVAEVSDAVVIGSRIVQLLEQAAPEAAAETLTRFVAEVREALDSVATAR.

Active-site proton acceptor residues include E49 and D60.

This sequence belongs to the TrpA family. In terms of assembly, tetramer of two alpha and two beta chains.

It catalyses the reaction (1S,2R)-1-C-(indol-3-yl)glycerol 3-phosphate + L-serine = D-glyceraldehyde 3-phosphate + L-tryptophan + H2O. It participates in amino-acid biosynthesis; L-tryptophan biosynthesis; L-tryptophan from chorismate: step 5/5. In terms of biological role, the alpha subunit is responsible for the aldol cleavage of indoleglycerol phosphate to indole and glyceraldehyde 3-phosphate. The sequence is that of Tryptophan synthase alpha chain from Paraburkholderia phytofirmans (strain DSM 17436 / LMG 22146 / PsJN) (Burkholderia phytofirmans).